The chain runs to 212 residues: Pyridoxine/pyridoxamine 5'-phosphate oxidase (212 aa).

Substrate is bound by residues 7–10 (RREY) and Lys66. FMN is bound by residues 61-66 (RIVLLK), 76-77 (YT), Arg82, Lys83, and Gln105. Substrate-binding residues include Tyr123, Arg127, and Ser131. Residues 140-141 (QS) and Trp185 each bind FMN. 191-193 (RLH) lines the substrate pocket. Arg195 contributes to the FMN binding site.

This sequence belongs to the pyridoxamine 5'-phosphate oxidase family. In terms of assembly, homodimer. FMN is required as a cofactor.

It catalyses the reaction pyridoxamine 5'-phosphate + O2 + H2O = pyridoxal 5'-phosphate + H2O2 + NH4(+). The enzyme catalyses pyridoxine 5'-phosphate + O2 = pyridoxal 5'-phosphate + H2O2. It functions in the pathway cofactor metabolism; pyridoxal 5'-phosphate salvage; pyridoxal 5'-phosphate from pyridoxamine 5'-phosphate: step 1/1. It participates in cofactor metabolism; pyridoxal 5'-phosphate salvage; pyridoxal 5'-phosphate from pyridoxine 5'-phosphate: step 1/1. Catalyzes the oxidation of either pyridoxine 5'-phosphate (PNP) or pyridoxamine 5'-phosphate (PMP) into pyridoxal 5'-phosphate (PLP). This Hahella chejuensis (strain KCTC 2396) protein is Pyridoxine/pyridoxamine 5'-phosphate oxidase.